A 294-amino-acid chain; its full sequence is MAALQEKKSCSQRMAEFRHYCWNPDTGQMLGRTPARWVWISLYYAGFYVVMTGLFALCIYVLMQTIDPYTPDYQDQLKSPGVTLRPDVYGERGLKISYNVSENSSWAGLTHTLHSFLAGYTPASQQDSINCTSEKYFFQESFAAPNHTKFSCKFTADMLQNCSGLADPSFGFEEGKPCFIIKMNRIVKFLPSNNTAPRVDCTFQDDPQKPRKDTEPLQVEYYPPNGTFSLHYFPYYGKKAQPHYSNPLVAAKLLNVPKNMQVSIVCKILADHVTFNNPHDPYEGKVEFKLTIQK.

Residues 1-36 (MAALQEKKSCSQRMAEFRHYCWNPDTGQMLGRTPAR) are Cytoplasmic-facing. A helical; Signal-anchor for type II membrane protein membrane pass occupies residues 37-57 (WVWISLYYAGFYVVMTGLFAL). Residues 58–294 (CIYVLMQTID…KVEFKLTIQK (237 aa)) lie on the Extracellular side of the membrane. 5 N-linked (GlcNAc...) asparagine glycosylation sites follow: asparagine 99, asparagine 103, asparagine 130, asparagine 146, and asparagine 161. Cysteine 131 and cysteine 152 are disulfide-bonded. An intrachain disulfide couples cysteine 162 to cysteine 178. N-linked (GlcNAc...) asparagine glycosylation is found at asparagine 193 and asparagine 225. Residues 194 to 294 (NTAPRVDCTF…KVEFKLTIQK (101 aa)) are immunoglobulin-like. Cysteines 201 and 266 form a disulfide.

It belongs to the X(+)/potassium ATPases subunit beta family. As to quaternary structure, the ATPase pump is composed of two subunits: alpha (catalytic) and beta (regulatory). Interacts with alpha subunit ATP12A; this interaction is required for the formation of a functionally active pump and targeting at the plasma membrane. Interacts (via N-terminus) with alpha subunit ATP4A (via the P-domain). N-glycosylation is necessary for assembly and functional expression of the pump at the plasma membrane. In terms of tissue distribution, expressed in parietal cells (at protein level).

It is found in the apical cell membrane. It localises to the cell membrane. The beta subunit of the gastric H(+)/K(+) ATPase pump which transports H(+) ions in exchange for K(+) ions across the apical membrane of parietal cells. Plays a structural and regulatory role in the assembly and membrane targeting of a functionally active pump. Within a transport cycle, the transfer of a H(+) ion across the membrane is coupled to ATP hydrolysis and is associated with a transient phosphorylation of the alpha subunit that shifts the pump conformation from inward-facing (E1) to outward-facing state (E2). Interacts with the phosphorylation domain of the alpha subunit and functions as a ratchet, stabilizing the lumenal-open E2 conformation and preventing the reverse reaction of the transport cycle. This chain is Potassium-transporting ATPase subunit beta (Atp4b), found in Mus musculus (Mouse).